Here is a 194-residue protein sequence, read N- to C-terminus: MHILTAGVDEAGRGPLVGSVFAAAVILPETFDLPGLTDSKKLSEKKRDALAEMIKNQAVAWHVAAAGPEEIASLNILHATMLAMKRAVDGLAVRPEKIFIDGNRIPEHLNIPAEAVVKGDSKIIEISAASVLAKTARDAEMYALAQRHPQYGFDKHKGYGTKQHLEALEKYGVLPEHRRDFAPVRNLLAQQALF.

Positions 3–193 (ILTAGVDEAG…VRNLLAQQAL (191 aa)) constitute an RNase H type-2 domain. The a divalent metal cation site is built by Asp-9, Glu-10, and Asp-101.

The protein belongs to the RNase HII family. The cofactor is Mn(2+). Mg(2+) serves as cofactor.

The protein localises to the cytoplasm. It catalyses the reaction Endonucleolytic cleavage to 5'-phosphomonoester.. Endonuclease that specifically degrades the RNA of RNA-DNA hybrids. The polypeptide is Ribonuclease HII (rnhB) (Neisseria meningitidis serogroup A / serotype 4A (strain DSM 15465 / Z2491)).